The primary structure comprises 319 residues: Dehydrogenase/reductase SDR family member 9 (319 aa).

An N-terminal signal peptide occupies residues 1–17; the sequence is MLFWVLGLLILCGFLWT. Residues 34-58 and Asp-83 each bind NAD(+); that span reads ITGCDSGFGNLAARTFDKKGFHVIA. Ser-164 lines the substrate pocket. Tyr-176 acts as the Proton acceptor in catalysis. Lys-180 contacts NAD(+).

It belongs to the short-chain dehydrogenases/reductases (SDR) family. In terms of assembly, homotetramer. Highly expressed in trachea and epidermis. Detected at lower levels in spinal cord, bone marrow, brain, tongue, esophagus, heart, colon, testis, placenta, lung, skeletal muscle and lymph node.

The protein localises to the microsome membrane. Its subcellular location is the endoplasmic reticulum membrane. It carries out the reaction 3beta-hydroxy-5alpha-pregnane-20-one + NAD(+) = 5alpha-pregnane-3,20-dione + NADH + H(+). The enzyme catalyses 17beta-hydroxy-5alpha-androstan-3-one + NAD(+) = 5alpha-androstan-3,17-dione + NADH + H(+). The catalysed reaction is androsterone + NAD(+) = 5alpha-androstan-3,17-dione + NADH + H(+). It catalyses the reaction 5alpha-androstane-3alpha,17beta-diol + NAD(+) = 17beta-hydroxy-5alpha-androstan-3-one + NADH + H(+). It carries out the reaction all-trans-retinol + NAD(+) = all-trans-retinal + NADH + H(+). The enzyme catalyses 3alpha-hydroxy-5alpha-pregnan-20-one + NAD(+) = 5alpha-pregnane-3,20-dione + NADH + H(+). 3-alpha-hydroxysteroid dehydrogenase that converts 3-alpha-tetrahydroprogesterone (allopregnanolone) to dihydroxyprogesterone and 3-alpha-androstanediol to dihydroxyprogesterone. Also plays a role in the biosynthesis of retinoic acid from retinaldehyde. Can utilize both NADH and NADPH. The chain is Dehydrogenase/reductase SDR family member 9 (DHRS9) from Homo sapiens (Human).